Reading from the N-terminus, the 362-residue chain is Cytochrome c oxidase subunit 2 (362 aa).

Residues 1–28 (MEQQEKRGTVRKALLGSVIGFGGLALAG) form the signal peptide. Cys29 carries the N-palmitoyl cysteine lipid modification. Residue Cys29 is the site of S-diacylglycerol cysteine attachment. Helical transmembrane passes span 60-80 (FWVW…GLFI) and 107-127 (IPLE…LFFF). Residues 171-206 (SDYVGTDEKRQEAAEKTKFDQGGDNPNPINGRSKTD) form a disordered region. Basic and acidic residues predominate over residues 176 to 191 (TDEKRQEAAEKTKFDQ). A compositionally biased stretch (polar residues) spans 197–206 (NPINGRSKTD). 6 residues coordinate Cu cation: His246, Cys287, Glu289, Cys291, His295, and Met298. Residues 325–362 (NSDALKSIGEAPYATSTHPFNSERATRDGANFDDTAAA) form a disordered region.

It belongs to the cytochrome c oxidase subunit 2 family. Associates with subunits I, III and IV to form cytochrome c oxidase. It depends on binuclear copper center (CuA) as a cofactor.

Its subcellular location is the cell membrane. The enzyme catalyses 4 Fe(II)-[cytochrome c] + O2 + 8 H(+)(in) = 4 Fe(III)-[cytochrome c] + 2 H2O + 4 H(+)(out). Functionally, subunits I and II form the functional core of the enzyme complex. Electrons originating in cytochrome c are transferred via heme a and Cu(A) to the binuclear center formed by heme a3 and Cu(B). In Corynebacterium diphtheriae (strain ATCC 700971 / NCTC 13129 / Biotype gravis), this protein is Cytochrome c oxidase subunit 2 (ctaC).